Consider the following 549-residue polypeptide: MSVLTSLPEWKNLSDIAASVKSAHMRDWFAQDTSRADKMQLEACGIFLDYSKNRVNEDALKGLFDLARACKLETLRDAMFSGEQINSTEGRAVLHTALRNFSDRKVLVDGEDVMPEVHATLEKIEAFTASIHSGEHKGYTGKPIKHIVAIGIGGSFLGPKIMTEALKPHTVDAVKVHFVANVDGCHIHDVLSSIDFEETLVVMSSKSFSTQETLQNTLTAKDWFLKSGGTQEDIAKHFVAVSSNVKAATDFGISADNIFPMWDWVGGRYSLWSAIGLPISLALGFENFKGLLEGAFEMDNHFTTAPLEENMPVLLGLLGIWYRNFFDAQSHVLLPYYHYLRGLPAYVQQLDMESNGKEVTQEGESVDYPTGPIIWGSEGTNGQHSFHQLIHQGSGVIPADFMLPLNVPNQDDTHHAMLASNCFGQTQALMQGKSFEECYADLDGKGLDDAERKRLAAHKTMPGNKPSNTFLFDSLTPQTLGALVAMYEHKVFVQGVIWNLNSFDQWGVELGKVLGNQVLAGIQGEADKDNFDASTQQLIAKFRAANAPK.

E353 serves as the catalytic Proton donor. Catalysis depends on residues H384 and K512.

Belongs to the GPI family.

Its subcellular location is the cytoplasm. It carries out the reaction alpha-D-glucose 6-phosphate = beta-D-fructose 6-phosphate. Its pathway is carbohydrate biosynthesis; gluconeogenesis. It participates in carbohydrate degradation; glycolysis; D-glyceraldehyde 3-phosphate and glycerone phosphate from D-glucose: step 2/4. In terms of biological role, catalyzes the reversible isomerization of glucose-6-phosphate to fructose-6-phosphate. The protein is Glucose-6-phosphate isomerase of Alteromonas mediterranea (strain DSM 17117 / CIP 110805 / LMG 28347 / Deep ecotype).